We begin with the raw amino-acid sequence, 578 residues long: Trehalase (578 aa).

A signal peptide spans M1–G19. Residue N78 is glycosylated (N-linked (GlcNAc...) asparagine). Substrate contacts are provided by residues R168, W175–D176, N212, and R221–Q223. An N-linked (GlcNAc...) asparagine glycan is attached at N261. Substrate is bound by residues R286–E288 and G319. The Proton donor/acceptor role is filled by D321. N-linked (GlcNAc...) asparagine glycosylation occurs at N369. Residue E514 is the Proton donor/acceptor of the active site. E528 is a binding site for substrate. A lipid anchor (GPI-anchor amidated serine) is attached at S555. A propeptide spans G556–R578 (removed in mature form).

This sequence belongs to the glycosyl hydrolase 37 family. As to quaternary structure, homodimer; disulfide-linked. Expressed in small intestine, kidney, and to a lesser extent in liver.

It localises to the cell membrane. The enzyme catalyses alpha,alpha-trehalose + H2O = alpha-D-glucose + beta-D-glucose. Intestinal trehalase is probably involved in the hydrolysis of ingested trehalose. The chain is Trehalase (TREH) from Oryctolagus cuniculus (Rabbit).